A 128-amino-acid chain; its full sequence is Glycine cleavage system H protein (128 aa).

The Lipoyl-binding domain maps to 24–106; it reads SVTVGITAHA…YGDGWFFKIK (83 aa). At Lys-65 the chain carries N6-lipoyllysine.

Belongs to the GcvH family. As to quaternary structure, the glycine cleavage system is composed of four proteins: P, T, L and H. Requires (R)-lipoate as cofactor.

In terms of biological role, the glycine cleavage system catalyzes the degradation of glycine. The H protein shuttles the methylamine group of glycine from the P protein to the T protein. In Chromobacterium violaceum (strain ATCC 12472 / DSM 30191 / JCM 1249 / CCUG 213 / NBRC 12614 / NCIMB 9131 / NCTC 9757 / MK), this protein is Glycine cleavage system H protein.